Reading from the N-terminus, the 203-residue chain is Reticulon-like protein B12 (203 aa).

Positions 24-203 (VADVMLWRKK…WANPENKKLS (180 aa)) constitute a Reticulon domain. Transmembrane regions (helical) follow at residues 34 to 54 (NVSV…EAFA), 55 to 75 (YTIF…LFLW), and 132 to 152 (VAVS…QTLC).

It localises to the endoplasmic reticulum membrane. The polypeptide is Reticulon-like protein B12 (RTNLB12) (Arabidopsis thaliana (Mouse-ear cress)).